We begin with the raw amino-acid sequence, 126 residues long: MADLNAIADQIQGLTLLEASQLVKMLEEKLGVSAAAAVAAPAAGGGAAAAAPAAEEKTEFTVVLTGAGANKINVIKAVREVTSLGLKEAKDLVDGAPKPIKEGVSKEEAATIAKKFTDAGATVEVK.

Belongs to the bacterial ribosomal protein bL12 family. In terms of assembly, homodimer. Part of the ribosomal stalk of the 50S ribosomal subunit. Forms a multimeric L10(L12)X complex, where L10 forms an elongated spine to which 2 to 4 L12 dimers bind in a sequential fashion. Binds GTP-bound translation factors.

Its function is as follows. Forms part of the ribosomal stalk which helps the ribosome interact with GTP-bound translation factors. Is thus essential for accurate translation. This chain is Large ribosomal subunit protein bL12, found in Solibacter usitatus (strain Ellin6076).